A 210-amino-acid polypeptide reads, in one-letter code: Thymidylate kinase (210 aa).

Gly14 to Ser21 provides a ligand contact to ATP.

Belongs to the thymidylate kinase family.

The catalysed reaction is dTMP + ATP = dTDP + ADP. Its pathway is pyrimidine metabolism; dTTP biosynthesis. Catalyzes the conversion of dTMP to dTDP. This is Thymidylate kinase (tmp1) from Schizosaccharomyces pombe (strain 972 / ATCC 24843) (Fission yeast).